Reading from the N-terminus, the 247-residue chain is Probable 2-phosphosulfolactate phosphatase (247 aa).

The protein belongs to the ComB family. Mg(2+) is required as a cofactor.

It carries out the reaction (2R)-O-phospho-3-sulfolactate + H2O = (2R)-3-sulfolactate + phosphate. This chain is Probable 2-phosphosulfolactate phosphatase, found in Clostridium perfringens (strain SM101 / Type A).